Consider the following 235-residue polypeptide: Small ribosomal subunit protein eS6 (235 aa).

Phosphoserine is present on residues serine 229 and serine 230.

This sequence belongs to the eukaryotic ribosomal protein eS6 family. Post-translationally, phosphorylated.

The polypeptide is Small ribosomal subunit protein eS6 (RPS6) (Kluyveromyces marxianus (Yeast)).